Consider the following 170-residue polypeptide: NADH-quinone oxidoreductase subunit J (170 aa).

The next 5 membrane-spanning stretches (helical) occupy residues 1–21 (MEFVFYVCSFAAVVSTFFVII), 30–50 (VYLIISLLSIAGVFFSLGAFF), 56–76 (VIIYAGAIIVLFVFVIMMLNI), 94–114 (IGPSILSLILLLSMTYAIFFL), and 138–158 (VFLVELSSILLLSALVVIFHI).

Belongs to the complex I subunit 6 family. Composed of 13 different subunits. Subunits NuoA, H, J, K, L, M, N constitute the membrane sector of the complex.

The protein resides in the cell membrane. The enzyme catalyses a quinone + NADH + 5 H(+)(in) = a quinol + NAD(+) + 4 H(+)(out). NDH-1 shuttles electrons from NADH, via FMN and iron-sulfur (Fe-S) centers, to quinones in the respiratory chain. Couples the redox reaction to proton translocation (for every two electrons transferred, four hydrogen ions are translocated across the cytoplasmic membrane), and thus conserves the redox energy in a proton gradient. The sequence is that of NADH-quinone oxidoreductase subunit J (nuoJ) from Buchnera aphidicola subsp. Acyrthosiphon pisum (strain APS) (Acyrthosiphon pisum symbiotic bacterium).